The primary structure comprises 86 residues: Large ribosomal subunit protein bL31B (86 aa).

The protein belongs to the bacterial ribosomal protein bL31 family. Type B subfamily. As to quaternary structure, part of the 50S ribosomal subunit.

The sequence is that of Large ribosomal subunit protein bL31B from Salmonella arizonae (strain ATCC BAA-731 / CDC346-86 / RSK2980).